The sequence spans 85 residues: Small ribosomal subunit protein bS18 (85 aa).

It belongs to the bacterial ribosomal protein bS18 family. As to quaternary structure, part of the 30S ribosomal subunit. Forms a tight heterodimer with protein bS6.

Its function is as follows. Binds as a heterodimer with protein bS6 to the central domain of the 16S rRNA, where it helps stabilize the platform of the 30S subunit. This chain is Small ribosomal subunit protein bS18, found in Helicobacter pylori (strain P12).